The sequence spans 203 residues: Shikimate kinase (203 aa).

38–43 (GAGKST) is an ATP binding site. Ser-42 contributes to the Mg(2+) binding site. Residues Asp-60, Arg-84, and Gly-106 each coordinate substrate. Arg-144 lines the ATP pocket. Arg-163 lines the substrate pocket.

The protein belongs to the shikimate kinase family. In terms of assembly, monomer. The cofactor is Mg(2+).

The protein localises to the cytoplasm. It carries out the reaction shikimate + ATP = 3-phosphoshikimate + ADP + H(+). It functions in the pathway metabolic intermediate biosynthesis; chorismate biosynthesis; chorismate from D-erythrose 4-phosphate and phosphoenolpyruvate: step 5/7. Catalyzes the specific phosphorylation of the 3-hydroxyl group of shikimic acid using ATP as a cosubstrate. This Rhodopseudomonas palustris (strain ATCC BAA-98 / CGA009) protein is Shikimate kinase.